A 346-amino-acid polypeptide reads, in one-letter code: Protein RecA (346 aa).

ATP is bound at residue 67 to 74 (GPESSGKT).

This sequence belongs to the RecA family.

It is found in the cytoplasm. Its function is as follows. Can catalyze the hydrolysis of ATP in the presence of single-stranded DNA, the ATP-dependent uptake of single-stranded DNA by duplex DNA, and the ATP-dependent hybridization of homologous single-stranded DNAs. It interacts with LexA causing its activation and leading to its autocatalytic cleavage. This Mycobacterium marinum (strain ATCC BAA-535 / M) protein is Protein RecA.